Reading from the N-terminus, the 139-residue chain is Actin-depolymerizing factor 1 (139 aa).

Residues 5–139 form the ADF-H domain; it reads ASGMAVHDDC…DLDVFRSRAN (135 aa). Serine 6 carries the post-translational modification Phosphoserine; by CPK3.

The protein belongs to the actin-binding proteins ADF family. In terms of assembly, interacts with the 14-3-3-like protein GRF6/AFT1. Phosphorylation at Ser-6 by CPK3/CDPK6 inhibits actin-depolimerizing activity. Expressed in vascular tissues of all organs.

The protein localises to the cytoplasm. It is found in the cytoskeleton. Its function is as follows. Actin-depolymerizing protein. Stimulates F-actin depolymerization. Involved in plant development, cell organ expansion and flowering by controlling breakdown of thick actin cables. Severs actin filaments or bundles and promotes actin cytoskeleton disassembly. Binds monomeric actin (G-actin) with a marked preference for the ADP-loaded form and inhibits the rate of nucleotide exchange on G-actin. The polypeptide is Actin-depolymerizing factor 1 (ADF1) (Arabidopsis thaliana (Mouse-ear cress)).